We begin with the raw amino-acid sequence, 123 residues long: U11/U12 small nuclear ribonucleoprotein 25 kDa protein (123 aa).

The region spanning 32-123 is the Ubiquitin-like domain; that stretch reads MTVRVCKMDG…VSFIKKLRQK (92 aa).

Component of the U11/U12 snRNPs that are part of the U12-type spliceosome.

The protein resides in the nucleus. This Mus musculus (Mouse) protein is U11/U12 small nuclear ribonucleoprotein 25 kDa protein (Snrnp25).